A 275-amino-acid polypeptide reads, in one-letter code: Elongation factor Ts (275 aa).

The segment at 80–83 (TDFV) is involved in Mg(2+) ion dislocation from EF-Tu.

It belongs to the EF-Ts family.

It localises to the cytoplasm. In terms of biological role, associates with the EF-Tu.GDP complex and induces the exchange of GDP to GTP. It remains bound to the aminoacyl-tRNA.EF-Tu.GTP complex up to the GTP hydrolysis stage on the ribosome. In Kineococcus radiotolerans (strain ATCC BAA-149 / DSM 14245 / SRS30216), this protein is Elongation factor Ts.